A 265-amino-acid polypeptide reads, in one-letter code: MSSDHEEDSLYGATELFGEPDGFYEKPAESHFAEYERSAVPAQSARRDTQVRIRLVGSSPLWGHLLWNSAIYTARHLDAHPEQVVGRCVLELGAAGALPSLVAGLLGARQVVATDYPDADLVGNIQYNVDHVIYGGKPPTEAPHVAVEGYIWGNDYGPLRRHLPPGQTGFDLVLLSDLVFNHTEHHKLLQTTRDLLAPAGRALVVFSPHRPWLLEKDLQFFETAAEYGLRAELIEQVTWAPMFADDPGPAEVRARVYAYYLTHCA.

The segment at 1-25 (MSSDHEEDSLYGATELFGEPDGFYE) is disordered. Residues Trp67, 93 to 95 (GAA), Asp115, Trp152, and Ser176 each bind S-adenosyl-L-methionine.

It belongs to the class I-like SAM-binding methyltransferase superfamily. EFM7 family.

It is found in the cytoplasm. In terms of biological role, S-adenosyl-L-methionine-dependent protein methyltransferase that trimethylates the N-terminal glycine 'Gly-2' of elongation factor 1-alpha, before also catalyzing the mono- and dimethylation of 'Lys-3'. The chain is Protein N-terminal and lysine N-methyltransferase EFM7 from Eremothecium gossypii (strain ATCC 10895 / CBS 109.51 / FGSC 9923 / NRRL Y-1056) (Yeast).